A 722-amino-acid chain; its full sequence is D-(-)-3-hydroxybutyrate oligomer hydrolase (722 aa).

The segment covering 1–11 (MQQRHLSQSAH) has biased composition (polar residues). The segment at 1–20 (MQQRHLSQSAHSHGHGTRRA) is disordered. The signal sequence occupies residues 1 to 36 (MQQRHLSQSAHSHGHGTRRAHRRNTIAIAVATLAVA). Residue S327 is the Charge relay system of the active site. The disordered stretch occupies residues 671-697 (PPSQVVRTTPRGGADTDTVGPRIQPSN).

The protein belongs to the D-(-)-3-hydroxybutyrate oligomer hydrolase family.

The protein resides in the secreted. The catalysed reaction is (3R)-hydroxybutanoate dimer + H2O = 2 (R)-3-hydroxybutanoate + H(+). The protein operates within lipid metabolism; butanoate metabolism. Participates in the degradation of poly-3-hydroxybutyrate (PHB). It works downstream of poly(3-hydroxybutyrate) depolymerase, hydrolyzing D(-)-3-hydroxybutyrate oligomers of various length (3HB-oligomers) into 3HB-monomers. The chain is D-(-)-3-hydroxybutyrate oligomer hydrolase from Cupriavidus metallidurans (strain ATCC 43123 / DSM 2839 / NBRC 102507 / CH34) (Ralstonia metallidurans).